The primary structure comprises 393 residues: NAD(P)H-quinone oxidoreductase subunit H, chloroplastic (393 aa).

The protein belongs to the complex I 49 kDa subunit family. As to quaternary structure, NDH is composed of at least 16 different subunits, 5 of which are encoded in the nucleus.

The protein localises to the plastid. Its subcellular location is the chloroplast thylakoid membrane. It carries out the reaction a plastoquinone + NADH + (n+1) H(+)(in) = a plastoquinol + NAD(+) + n H(+)(out). It catalyses the reaction a plastoquinone + NADPH + (n+1) H(+)(in) = a plastoquinol + NADP(+) + n H(+)(out). Functionally, NDH shuttles electrons from NAD(P)H:plastoquinone, via FMN and iron-sulfur (Fe-S) centers, to quinones in the photosynthetic chain and possibly in a chloroplast respiratory chain. The immediate electron acceptor for the enzyme in this species is believed to be plastoquinone. Couples the redox reaction to proton translocation, and thus conserves the redox energy in a proton gradient. The chain is NAD(P)H-quinone oxidoreductase subunit H, chloroplastic from Acorus calamus var. americanus (American sweet flag).